We begin with the raw amino-acid sequence, 222 residues long: Endonuclease V (222 aa).

The Mg(2+) site is built by aspartate 34 and aspartate 102.

The protein belongs to the endonuclease V family. Mg(2+) is required as a cofactor.

Its subcellular location is the cytoplasm. The catalysed reaction is Endonucleolytic cleavage at apurinic or apyrimidinic sites to products with a 5'-phosphate.. Functionally, DNA repair enzyme involved in the repair of deaminated bases. Selectively cleaves double-stranded DNA at the second phosphodiester bond 3' to a deoxyinosine leaving behind the intact lesion on the nicked DNA. The chain is Endonuclease V from Photorhabdus laumondii subsp. laumondii (strain DSM 15139 / CIP 105565 / TT01) (Photorhabdus luminescens subsp. laumondii).